The following is a 372-amino-acid chain: ATP-sensitive inward rectifier potassium channel 1 (372 aa).

At 1-58 (MFKHLRRWFVTHIFGRSRQRARLVSKDGRCNIEFGNVDAQSRFIFFVDIWTTVLDLKW) the chain is on the cytoplasmic side. Ser25 carries the phosphoserine; by SGK1 modification. Residues 59 to 83 (RYKMTVFITAFLGSWFLFGLLWYVV) form a helical membrane-spanning segment. Residues 84 to 108 (AYVHKDLPEFYPPDNRTPCVENING) are Extracellular-facing. N-linked (GlcNAc...) asparagine glycosylation occurs at Asn98. The segment at residues 109-120 (MTSAFLFSLETQ) is an intramembrane region (helical; Pore-forming). Residues 121-127 (VTIGYGF) constitute an intramembrane region (pore-forming). The short motif at 122–127 (TIGYGF) is the Selectivity filter element. The Extracellular segment spans residues 128 to 136 (RFVTEQCAT). A helical membrane pass occupies residues 137–158 (AIFLLIFQSILGVIINSFMCGA). At 159–372 (ILAKISRPKK…EVDETDDTQM (214 aa)) the chain is on the cytoplasmic side. Residues 161-188 (AKISRPKKRAKTITFSKNAVISKRGGKL) form a polyphosphoinositide (PIP2)-binding region. 204 to 211 (GSHIYGKL) is an ATP binding site.

Belongs to the inward rectifier-type potassium channel (TC 1.A.2.1) family. KCNJ1 subfamily. Interacts with SGK1 and SLC9A3R2/NHERF2. Phosphorylation at Ser-25 by SGK1 is necessary for its expression at the cell membrane.

It is found in the cell membrane. The catalysed reaction is K(+)(in) = K(+)(out). Inhibited by WNK3. Activated by phosphatidylinositol 4,5 biphosphate (PtdIns(4,5)P2). Its function is as follows. Inward rectifier potassium channels are characterized by a greater tendency to allow potassium to flow into the cell rather than out of it. Their voltage dependence is regulated by the concentration of extracellular potassium; as external potassium is raised, the voltage range of the channel opening shifts to more positive voltages. The inward rectification is mainly due to the blockage of outward current by internal magnesium. This channel is activated by internal ATP and can be blocked by external barium. In the kidney, probably plays a major role in potassium homeostasis. This Mus musculus (Mouse) protein is ATP-sensitive inward rectifier potassium channel 1 (Kcnj1).